The chain runs to 83 residues: Small ribosomal subunit protein uS17 (83 aa).

The protein belongs to the universal ribosomal protein uS17 family. As to quaternary structure, part of the 30S ribosomal subunit.

Its function is as follows. One of the primary rRNA binding proteins, it binds specifically to the 5'-end of 16S ribosomal RNA. This Gloeobacter violaceus (strain ATCC 29082 / PCC 7421) protein is Small ribosomal subunit protein uS17.